Consider the following 1119-residue polypeptide: Transient receptor potential cation channel subfamily A member 1 (1119 aa).

Over 1 to 718 (MKRSLRKMWR…MKWLAYGFRA (718 aa)) the chain is Cytoplasmic. 16 ANK repeats span residues 62–92 (MDTF…EVLH), 97–126 (YGNT…NPNL), 130–160 (NMMA…DVNL), 164–193 (NGNT…KPCK), 197–226 (WGCF…EHGY), 238–267 (GKAT…QIDP), 271–301 (GRCT…SVDI), 308–337 (CHET…DINK), 341–370 (EGRS…QVDI), 374–403 (FGRN…QQIK), 412–441 (DGCT…SIHS), 445–474 (DKKS…DTRL), 481–510 (HGMT…LFLS), 513–542 (NGWT…KCTD), 547–576 (DGNT…DIVL), and 579–609 (QQAS…DECL). 5 disulfide bridges follow: Cys192–Cys665, Cys462–Cys665, Cys608–Cys621, Cys621–Cys665, and Cys633–Cys856. Pro394 is modified (4-hydroxyproline; by EGLN1; transient; in normoxia and hyperoxia). (E)-cinnamaldehyde contacts are provided by Cys414 and Cys421. A (E)-cinnamaldehyde-binding site is contributed by Cys621. A Cysteine sulfenic acid (-SOH); transient; in hyperoxia modification is found at Cys633. (E)-cinnamaldehyde is bound by residues Cys641, Cys665, and Lys710. The chain crosses the membrane as a helical span at residues 719–739 (HMMNLGSYCLGLIPMTILVVN). Over 740–767 (IKPGMAFNSTGIINETSDHSEILDTTNS) the chain is Extracellular. Asn747 and Asn753 each carry an N-linked (GlcNAc...) asparagine glycan. Residues 768 to 793 (YLIKTCMILVFLSSIFGYCKEAGQIF) form a helical membrane-spanning segment. Residues Glu788 and Gln791 each coordinate Ca(2+). Residues 794-798 (QQKRN) are Cytoplasmic-facing. Residues 799–823 (YFMDISNVLEWIIYTTGIIFVLPLF) form a helical membrane-spanning segment. The Ca(2+) site is built by Asn805 and Glu808. At 824-829 (VEIPAH) the chain is on the extracellular side. The helical transmembrane segment at 830–850 (LQWQCGAIAVYFYWMNFLLYL) threads the bilayer. Over 851 to 862 (QRFENCGIFIVM) the chain is Cytoplasmic. A Cysteine sulfenic acid (-SOH); transient; in hyperoxia modification is found at Cys856. A helical transmembrane segment spans residues 863–892 (LEVILKTLLRSTVVFIFLLLAFGLSFYILL). The Extracellular portion of the chain corresponds to 893–901 (NLQDPFSSP). Positions 902 to 922 (LLSIIQTFSMMLGDINYRESF) form an intramembrane region, pore-forming. The Extracellular segment spans residues 923–933 (LEPYLRNELAH). The chain crosses the membrane as a helical span at residues 934 to 960 (PVLSFAQLVSFTIFVPIVLMNLLIGLA). Residues 961 to 1119 (VGDIAEVQKH…VKAKTHHLEP (159 aa)) are Cytoplasmic-facing. Residues 1042-1071 (MEILKQKYRLKDLTFLLEKQHELIKLIIQK) adopt a coiled-coil conformation. A 1,2-diacyl-sn-glycero-3-phospho-(1D-myo-inositol) is bound at residue 1046-1052 (KQKYRLK).

The protein belongs to the transient receptor (TC 1.A.4) family. Homotetramer. Interacts with TMEM100. Interacts with EGLN1. Interacts with the scorpion wasabi receptor toxin at the same site that electrophiles but in a non-covalent manner. In terms of processing, TRPA1 activation by electrophiles occurs though covalent modification of specific cysteine residues in the N-terminal cytoplasmic domain. Post-translationally, hydroxylation is required for TRPA1 activity inhibition in normoxia. In hypoxia, the decrease in oxygen concentration diminishes the activity of the hydroxylase EGLN1, thus relieving TRPA1 from inhibition and ultimately leading to channel activation. Oxidation of Cys-633 and Cys-856 in hyperoxia may override the hydroxylase EGLN1-mediated inhibition, causing TRPA1 activation.

It localises to the cell membrane. It catalyses the reaction Ca(2+)(in) = Ca(2+)(out). The enzyme catalyses Mg(2+)(in) = Mg(2+)(out). The catalysed reaction is Na(+)(in) = Na(+)(out). It carries out the reaction K(+)(in) = K(+)(out). It catalyses the reaction Zn(2+)(in) = Zn(2+)(out). With respect to regulation, electrophilic ligands activate the channel by covalent modification of intracellular cysteines; Cys-621 plays a key role in covalent binding of electrophiles. Extracellular Ca(2+) both potentiates and inactivates TRPA1; a rapid potentiation follows by slow desensitization. Activated by increase in intracellular Ca(2+) concentration. Inhibited by the potent blocker of TRPV channels ruthenium red, A-967079, AP-18, HC-030031, and aryl sulfonamide derivative (S)-N-(4-chlorobenzyl)-1-((4-fluorophenyl)sulfonyl)pyrrolidine-2-carboxamide (ASD). Activated by benzyl isothiocyanate (BITC), iodoacetamide, sulfhydryl reactive agent MTSEA, N-methyl maleimide (NMM), N-ethylmaleimide (NEM), and 2-aminoethyldiphenylborinate (2-APB). Also activated by hyperoxia. Acivated by intracellular Zn(2+). TRPA1 activation may critically depend on the presence of small intracellular compounds such as polyphosphates. Ligand-activated Ca(2+)-permeable, nonselective cation channel involved in pain detection and possibly also in cold perception, oxygen concentration perception, cough, itch, and inner ear function. Has a relatively high Ca(2+) selectivity, with a preference for divalent over monovalent cations (Ca(2+) &gt; Ba(2+) &gt; Mg(2+) &gt; NH4(+) &gt; Li(+) &gt; K(+)), the influx of cation into the cytoplasm leads to membrane depolarization. Has a central role in the pain response to endogenous inflammatory mediators, such as bradykinin and to a diverse array of irritants. Activated by a large variety of structurally unrelated electrophilic and non-electrophilic chemical compounds, such as allylthiocyanate (AITC) from mustard oil or wasabi, cinnamaldehyde, diallyl disulfide (DADS) from garlic, and acrolein, an environmental irritant. Electrophilic ligands activate TRPA1 by interacting with critical N-terminal Cys residues in a covalent manner. Non-electrophile agonists bind at distinct sites in the transmembrane domain to promote channel activation. Also acts as an ionotropic cannabinoid receptor by being activated by delta(9)-tetrahydrocannabinol (THC), the psychoactive component of marijuana. May be a component for the mechanosensitive transduction channel of hair cells in inner ear, thereby participating in the perception of sounds. The polypeptide is Transient receptor potential cation channel subfamily A member 1 (Homo sapiens (Human)).